The sequence spans 358 residues: Arginase (358 aa).

Positions 146, 174, 176, and 178 each coordinate Mn(2+). Substrate is bound by residues 176–180, 187–189, and D233; these read HADIN and SGN. Residues D280 and D282 each coordinate Mn(2+). T294 and E325 together coordinate substrate.

The protein belongs to the arginase family. In terms of assembly, homohexamer. The cofactor is Mn(2+).

The protein resides in the cytoplasm. The catalysed reaction is L-arginine + H2O = urea + L-ornithine. Its pathway is nitrogen metabolism; urea cycle; L-ornithine and urea from L-arginine: step 1/1. The polypeptide is Arginase (aga-1) (Neurospora crassa (strain ATCC 24698 / 74-OR23-1A / CBS 708.71 / DSM 1257 / FGSC 987)).